Reading from the N-terminus, the 273-residue chain is Large ribosomal subunit protein uL2cz/uL2cy (273 aa).

2 disordered regions span residues 1–22 (MAKH…DRQV) and 225–273 (PVDH…RRRK).

This sequence belongs to the universal ribosomal protein uL2 family. In terms of assembly, part of the 50S ribosomal subunit.

The protein resides in the plastid. Its subcellular location is the chloroplast. This chain is Large ribosomal subunit protein uL2cz/uL2cy (rpl2-A), found in Zea mays (Maize).